Reading from the N-terminus, the 68-residue chain is DNA-directed RNA polymerase subunit omega (68 aa).

This sequence belongs to the RNA polymerase subunit omega family. The RNAP catalytic core consists of 2 alpha, 1 beta, 1 beta' and 1 omega subunit. When a sigma factor is associated with the core the holoenzyme is formed, which can initiate transcription.

It catalyses the reaction RNA(n) + a ribonucleoside 5'-triphosphate = RNA(n+1) + diphosphate. Promotes RNA polymerase assembly. Latches the N- and C-terminal regions of the beta' subunit thereby facilitating its interaction with the beta and alpha subunits. This chain is DNA-directed RNA polymerase subunit omega, found in Chromobacterium violaceum (strain ATCC 12472 / DSM 30191 / JCM 1249 / CCUG 213 / NBRC 12614 / NCIMB 9131 / NCTC 9757 / MK).